Consider the following 943-residue polypeptide: Tyrosine-protein kinase transmembrane receptor ROR2 (943 aa).

An N-terminal signal peptide occupies residues 1–33; the sequence is MARGSALPRRPLLCIPAVWAAAALLLSVSRTSG. Residues 34–403 are Extracellular-facing; the sequence is EVEVLDPNDP…CSPRDSSKMG (370 aa). One can recognise an Ig-like C2-type domain in the interval 55–145; sequence PTLKGYFLNF…VATNGMKTIT (91 aa). N-linked (GlcNAc...) asparagine glycosylation is present at Asn-70. Intrachain disulfides connect Cys-83-Cys-135, Cys-174-Cys-239, Cys-182-Cys-232, Cys-223-Cys-264, Cys-252-Cys-300, Cys-256-Cys-286, Cys-316-Cys-394, Cys-337-Cys-377, and Cys-365-Cys-389. One can recognise an FZ domain in the interval 169-303; it reads HEDGFCQPYR…SPDAANCMRI (135 aa). Asn-188 carries N-linked (GlcNAc...) asparagine glycosylation. Residues 316 to 394 enclose the Kringle domain; that stretch reads CYNGSGMDYR…RMELCDVPSC (79 aa). A glycan (N-linked (GlcNAc...) asparagine) is linked at Asn-318. The helical transmembrane segment at 404–424 threads the bilayer; it reads ILYILVPSIAIPLVIACLFFL. Residues 425–943 lie on the Cytoplasmic side of the membrane; sequence VCMCRNKQKA…VDEAQVQLEA (519 aa). A sulfoserine; partial mark is found at Ser-469 and Ser-471. Residues 473–746 form the Protein kinase domain; sequence VRFMEELGED…PRFKDIHSRL (274 aa). ATP is bound by residues 479–487 and Lys-507; that span reads LGEDRFGKV. The active-site Proton acceptor is Asp-615. Tyr-646 carries the phosphotyrosine; by autocatalysis modification. Disordered stretches follow at residues 757–796 and 850–931; these read SSAQTSGASNTTQTSSLSTSPVSNVSNARYVGPKQKAPPF and QVPP…DCDT. 2 stretches are compositionally biased toward low complexity: residues 765–791 and 857–872; these read SNTTQTSSLSTSPVSNVSNARYVGPKQ and PKPSSHHSGSGSTSTG. Arg-785 bears the Asymmetric dimethylarginine mark. Polar residues predominate over residues 873 to 883; it reads YVTTAPSNTSM.

Belongs to the protein kinase superfamily. Tyr protein kinase family. ROR subfamily. In terms of assembly, homodimer; promotes osteogenesis. Binds YWHAB. Interacts with WTIP. Interacts with ROR2. It depends on Mg(2+) as a cofactor.

It localises to the cell membrane. The enzyme catalyses L-tyrosyl-[protein] + ATP = O-phospho-L-tyrosyl-[protein] + ADP + H(+). Functionally, tyrosine-protein kinase receptor which may be involved in the early formation of the chondrocytes. It seems to be required for cartilage and growth plate development. Phosphorylates YWHAB, leading to induction of osteogenesis and bone formation. In contrast, has also been shown to have very little tyrosine kinase activity in vitro. May act as a receptor for wnt ligand WNT5A which may result in the inhibition of WNT3A-mediated signaling. The polypeptide is Tyrosine-protein kinase transmembrane receptor ROR2 (ROR2) (Homo sapiens (Human)).